The chain runs to 96 residues: Small ribosomal subunit protein uS19 (96 aa).

The protein belongs to the universal ribosomal protein uS19 family.

In terms of biological role, protein S19 forms a complex with S13 that binds strongly to the 16S ribosomal RNA. This chain is Small ribosomal subunit protein uS19, found in Koribacter versatilis (strain Ellin345).